Consider the following 261-residue polypeptide: Global transcriptional regulator CodY (261 aa).

The segment at 1-159 is GAF domain; the sequence is MPNLLEKTRK…ASTVVGIQLL (159 aa). A DNA-binding region (H-T-H motif) is located at residues 207–226; that stretch reads ASVIADRIGITRSVIVNALR.

Belongs to the CodY family.

The protein resides in the cytoplasm. Its function is as follows. DNA-binding global transcriptional regulator which is involved in the adaptive response to starvation and acts by directly or indirectly controlling the expression of numerous genes in response to nutrient availability. During rapid exponential growth, CodY is highly active and represses genes whose products allow adaptation to nutrient depletion. The polypeptide is Global transcriptional regulator CodY (Streptococcus agalactiae serotype Ia (strain ATCC 27591 / A909 / CDC SS700)).